We begin with the raw amino-acid sequence, 124 residues long: Small ribosomal subunit protein uS12 (124 aa).

Asp-90 is modified (3-methylthioaspartic acid).

Belongs to the universal ribosomal protein uS12 family. Part of the 30S ribosomal subunit. Contacts proteins S8 and S17. May interact with IF1 in the 30S initiation complex.

Its function is as follows. With S4 and S5 plays an important role in translational accuracy. In terms of biological role, interacts with and stabilizes bases of the 16S rRNA that are involved in tRNA selection in the A site and with the mRNA backbone. Located at the interface of the 30S and 50S subunits, it traverses the body of the 30S subunit contacting proteins on the other side and probably holding the rRNA structure together. The combined cluster of proteins S8, S12 and S17 appears to hold together the shoulder and platform of the 30S subunit. The chain is Small ribosomal subunit protein uS12 from Wolbachia sp. subsp. Brugia malayi (strain TRS).